A 276-amino-acid polypeptide reads, in one-letter code: Cell wall synthesis protein KRE9 (276 aa).

The signal sequence occupies residues 1-21 (MRLQRNSIICALVFLVSFVLG).

It belongs to the KRE9/KNH1 family. Post-translationally, O-glycosylated.

It is found in the secreted. It localises to the cell wall. Involved in cell wall beta(1-&gt;6) glucan synthesis. This Saccharomyces cerevisiae (strain ATCC 204508 / S288c) (Baker's yeast) protein is Cell wall synthesis protein KRE9.